We begin with the raw amino-acid sequence, 98 residues long: Bombyxin E-1 (98 aa).

Positions 1-19 are cleaved as a signal peptide; the sequence is MNRPVFLVLLLTGFLCIAA. The residue at position 20 (Gln20) is a Pyrrolidone carboxylic acid. 3 disulfide bridges follow: Cys29–Cys85, Cys41–Cys98, and Cys84–Cys89. Positions 50–75 are cleaved as a propeptide — c peptide like; sequence SESSLASYSSRGWPWLPTPNFNKRAI.

This sequence belongs to the insulin family. As to quaternary structure, heterodimer of a B chain and an A chain linked by two disulfide bonds.

It is found in the secreted. PTTH is a brain peptide responsible for activation of prothoracic glands to produce ecdysone in insects. The protein is Bombyxin E-1 (BBXE1) of Bombyx mori (Silk moth).